Reading from the N-terminus, the 69-residue chain is Guanine nucleotide-binding protein subunit gamma (69 aa).

N-acetylserine is present on Ser-2. Cysteine methyl ester is present on Cys-66. A lipid anchor (S-geranylgeranyl cysteine) is attached at Cys-66. Residues 67–69 (SVL) constitute a propeptide, removed in mature form.

This sequence belongs to the G protein gamma family. In terms of assembly, g proteins are composed of 3 units, alpha, beta and gamma. Interacts with gpbA, and this requires phlp1. Post-translationally, this protein is thought to be subject to lipidation, and this requires phlp1.

It localises to the cell membrane. In terms of biological role, guanine nucleotide-binding proteins (G proteins) are involved as a modulator or transducer in various transmembrane signaling systems. This major G-protein of the squid photoreceptor is involved in visual transduction. The beta and gamma chains are required for the GTPase activity, for replacement of GDP by GTP, and for G protein-effector interaction. Required for normal chemotaxis in response to cAMP. This Dictyostelium discoideum (Social amoeba) protein is Guanine nucleotide-binding protein subunit gamma (gpgA).